The following is a 218-amino-acid chain: Dual specificity protein phosphatase TpbA (218 aa).

Positions 1–28 (MHRSPLAWLRLLLAAVLGAFLLGGPLHA) are cleaved as a signal peptide. The Tyrosine-protein phosphatase domain maps to 44 to 188 (DPSINLYRMS…YVRGADVDGL (145 aa)). Asp105 acts as the Proton donor/acceptor in catalysis. The Phosphocysteine intermediate role is filled by Cys132.

Belongs to the protein-tyrosine phosphatase family. Monomer in solution.

The protein localises to the periplasm. It catalyses the reaction O-phospho-L-tyrosyl-[protein] + H2O = L-tyrosyl-[protein] + phosphate. It carries out the reaction O-phospho-L-threonyl-[protein] + H2O = L-threonyl-[protein] + phosphate. The catalysed reaction is O-phospho-L-seryl-[protein] + H2O = L-seryl-[protein] + phosphate. Its activity is regulated as follows. The phosphatase activity is completely inhibited by trisodium orthovanadate, a tyrosine phosphatase specific inhibitor. Phosphatase that regulates diverse phenotypes in P.aeruginosa via regulation of the concentration of cellular c-di-GMP. Acts by dephosphorylating the membrane-anchored diguanylate cyclase TpbB at tyrosine and serine/threonine sites, leading to inactivation of TpbB and reduced c-di-GMP production. The reduced cellular c-di-GMP concentration leads to reduced adhesin expression, reduced extracellular polysaccharide (EPS) production, pellicule production, cell aggregation and biofilm formation, and enhanced swimming and swarming. It affects colony morphology and controls rugose colony formation. TpbA also acts as a positive regulator of extracellular DNA (eDNA, a major component of the biofilm matrix) and cell lysis by reducing c-di-GMP concentrations. In vitro shows phosphatase activity toward p-nitrophenyl phosphate (pNPP), tyrosine phosphopeptides and a threonine phosphopeptide. Does not have phosphodiesterases (PDE) activity, and cannot degrade c-di-GMP. The polypeptide is Dual specificity protein phosphatase TpbA (Pseudomonas aeruginosa (strain UCBPP-PA14)).